A 311-amino-acid polypeptide reads, in one-letter code: MKNDERTPLPDALAQPLERFYAYLHTEKGLSLYTQRNYKQQLETMTQYLVQVGLTHWTQLDSAWVRQLVMQGKRQGMKASSIATRLSSLRSFLDFLILRGELQANPAKGVSAPRKQRTLPKNLDVDEMAQLLEVTDDDPLSIRDRAIMELMYGAGLRLAELVSIDIKDVNLSEGEIRVIGKGNKERKVWFAGQAQEWVGKWLKLRSQLADSAETALFVSKLGTRISHRSVQKRMAEWGQKQAVASHISPHKLRHSFATHMLESSNNLRAVQELLGHENIATTQIYTHLDFQHLAQVYDQAHPRARKKNKDD.

The Core-binding (CB) domain occupies 11 to 97 (DALAQPLERF…SLRSFLDFLI (87 aa)). The Tyr recombinase domain occupies 118-298 (TLPKNLDVDE…DFQHLAQVYD (181 aa)). Catalysis depends on residues Arg157, Lys181, His250, Arg253, and His276. The O-(3'-phospho-DNA)-tyrosine intermediate role is filled by Tyr285.

The protein belongs to the 'phage' integrase family. XerC subfamily. As to quaternary structure, forms a cyclic heterotetrameric complex composed of two molecules of XerC and two molecules of XerD.

It is found in the cytoplasm. Site-specific tyrosine recombinase, which acts by catalyzing the cutting and rejoining of the recombining DNA molecules. The XerC-XerD complex is essential to convert dimers of the bacterial chromosome into monomers to permit their segregation at cell division. It also contributes to the segregational stability of plasmids. The polypeptide is Tyrosine recombinase XerC (Vibrio cholerae serotype O1 (strain ATCC 39541 / Classical Ogawa 395 / O395)).